Here is a 118-residue protein sequence, read N- to C-terminus: Small ribosomal subunit protein uS13 (118 aa).

The disordered stretch occupies residues 93–118 (RGLPVRGQRTKTNARTRKGPRKPIRK).

This sequence belongs to the universal ribosomal protein uS13 family. Part of the 30S ribosomal subunit. Forms a loose heterodimer with protein S19. Forms two bridges to the 50S subunit in the 70S ribosome.

Its function is as follows. Located at the top of the head of the 30S subunit, it contacts several helices of the 16S rRNA. In the 70S ribosome it contacts the 23S rRNA (bridge B1a) and protein L5 of the 50S subunit (bridge B1b), connecting the 2 subunits; these bridges are implicated in subunit movement. Contacts the tRNAs in the A and P-sites. This chain is Small ribosomal subunit protein uS13, found in Pseudomonas fluorescens (strain Pf0-1).